A 515-amino-acid polypeptide reads, in one-letter code: Centromere protein T (515 aa).

2 disordered regions span residues 24–156 and 271–411; these read ADSR…KRKQ and LSGK…DPHK. The segment covering 29–44 has biased composition (basic residues); the sequence is PMRRRSTRINAQRRRS. Residues 45–58 show a composition bias toward polar residues; sequence QTPYSNRQGSQTKT. Phosphothreonine is present on Thr-86. Residues 94–375 form a flexible stalk domain region; that stretch reads ILLTAPESST…DSLPAEQPPP (282 aa). Over residues 296–306 the composition is skewed to polar residues; sequence SSGTRLQSRMS. Phosphoserine is present on residues Ser-313, Ser-333, Ser-345, Ser-346, Ser-357, and Ser-376.

It belongs to the CENP-T/CNN1 family. In terms of assembly, component of the CENPA-CAD complex, composed of CENPI, CENPK, CENPL, CENPO, CENPP, CENPQ, CENPR and CENPS. The CENPA-CAD complex is probably recruited on centromeres by the CENPA-NAC complex, at least composed of CENPA, CENPC, CENPH, CENPM, CENPN, CENPT and CENPU. Identified in a centromeric complex containing histones H2A, H2B, H3 and H4, and at least CENPA, CENPB, CENPC, CENPT, CENPN, HJURP, SUPT16H, SSRP1 and RSF1. Interacts (via N-terminus) with the NDC80 complex. Heterodimer with CENPW; this dimer coassembles with CENPS-CENPX heterodimers at centromeres to form the tetrameric CENP-T-W-S-X complex. Post-translationally, dynamically phosphorylated during the cell cycle. Phosphorylated during G2 phase, metaphase and anaphase, but not during telophase or G1 phase.

The protein resides in the nucleus. It localises to the chromosome. The protein localises to the centromere. Its subcellular location is the kinetochore. Component of the CENPA-NAC (nucleosome-associated) complex, a complex that plays a central role in assembly of kinetochore proteins, mitotic progression and chromosome segregation. The CENPA-NAC complex recruits the CENPA-CAD (nucleosome distal) complex and may be involved in incorporation of newly synthesized CENPA into centromeres. Part of a nucleosome-associated complex that binds specifically to histone H3-containing nucleosomes at the centromere, as opposed to nucleosomes containing CENPA. Component of the heterotetrameric CENP-T-W-S-X complex that binds and supercoils DNA, and plays an important role in kinetochore assembly. CENPT has a fundamental role in kinetochore assembly and function. It is one of the inner kinetochore proteins, with most further proteins binding downstream. Required for normal chromosome organization and normal progress through mitosis. The protein is Centromere protein T (Cenpt) of Mus musculus (Mouse).